Reading from the N-terminus, the 276-residue chain is Stathmin domain-containing protein 1 (276 aa).

Disordered regions lie at residues 1–40, 61–106, and 226–250; these read MGCG…ENCS, VQMG…RERQ, and GFEP…ATLI. The N-myristoyl glycine moiety is linked to residue glycine 2. Polar residues-rich tracts occupy residues 68–78 and 87–100; these read GTISENSPSPS and DLVT…PQSL. Positions 118-244 constitute an SLD domain; it reads QGIIQSHSKV…GKPLKRKKSK (127 aa).

The protein is Stathmin domain-containing protein 1 (STMND1) of Homo sapiens (Human).